The chain runs to 573 residues: 60 kDa heat shock protein, mitochondrial (573 aa).

The transit peptide at 1-26 (MLRLPTVFRQMRPVSRVLAPHLTRAY) directs the protein to the mitochondrion. An N6-succinyllysine modification is found at Lys-31. Residues Ser-67 and Ser-70 each carry the phosphoserine modification. Lys-75 contacts ATP. Residue Lys-75 is modified to N6-acetyllysine. Lys-82 bears the N6-acetyllysine; alternate mark. Position 82 is an N6-succinyllysine; alternate (Lys-82). At Lys-87 the chain carries N6-acetyllysine. Residue Tyr-90 is modified to Phosphotyrosine. Position 91 is an N6-acetyllysine (Lys-91). 111–115 (DGTTT) provides a ligand contact to ATP. Lys-125 is modified (N6-acetyllysine; alternate). Lys-125 bears the N6-succinyllysine; alternate mark. Lys-130 carries the N6-acetyllysine modification. Lys-133 is subject to N6-acetyllysine; alternate. The residue at position 133 (Lys-133) is an N6-succinyllysine; alternate. Lys-133 carries the N6-malonyllysine; alternate modification. Lys-156 carries the post-translational modification N6-acetyllysine. N6-acetyllysine; alternate is present on residues Lys-191, Lys-202, Lys-205, Lys-218, and Lys-236. Residues Lys-191, Lys-202, Lys-205, Lys-218, and Lys-236 each carry the N6-succinyllysine; alternate modification. Lys-249 is modified (N6-acetyllysine). Lys-250 bears the N6-acetyllysine; alternate mark. Lys-250 is modified (N6-succinyllysine; alternate). Residues Lys-269 and Lys-292 each carry the N6-acetyllysine modification. Lys-301 bears the N6-succinyllysine mark. At Lys-314 the chain carries N6-acetyllysine. Lys-352 is subject to N6-acetyllysine; alternate. Residue Lys-352 is modified to N6-succinyllysine; alternate. Lys-389 is subject to N6-acetyllysine. An N6-acetyllysine; alternate modification is found at Lys-396. Lys-396 bears the N6-succinyllysine; alternate mark. The residue at position 410 (Ser-410) is a Phosphoserine. Residue Gly-440 participates in ATP binding. Residue Lys-469 is modified to N6-acetyllysine. N6-acetyllysine; alternate is present on Lys-481. An N6-succinyllysine; alternate modification is found at Lys-481. Phosphoserine is present on Ser-488. Asp-520 contacts ATP. Lys-551 is covalently cross-linked (Glycyl lysine isopeptide (Lys-Gly) (interchain with G-Cter in SUMO2)).

The protein belongs to the chaperonin (HSP60) family. Homoheptamer arranged in a ring structure. The functional units of these chaperonins consist of heptameric rings of the large subunit Hsp60, which function as a back-to-back double ring. Interacts with 2 heptameric Hsp10 rings to form the symmetrical football complex. Interacts with HRAS. Interacts with ATAD3A. Interacts with ETFBKMT and EEF1AKMT3. Interacts with MFHAS1.

The protein localises to the mitochondrion matrix. The catalysed reaction is ATP + H2O + a folded polypeptide = ADP + phosphate + an unfolded polypeptide.. Functionally, chaperonin implicated in mitochondrial protein import and macromolecular assembly. Together with Hsp10, facilitates the correct folding of imported proteins. May also prevent misfolding and promote the refolding and proper assembly of unfolded polypeptides generated under stress conditions in the mitochondrial matrix. The functional units of these chaperonins consist of heptameric rings of the large subunit Hsp60, which function as a back-to-back double ring. In a cyclic reaction, Hsp60 ring complexes bind one unfolded substrate protein per ring, followed by the binding of ATP and association with 2 heptameric rings of the co-chaperonin Hsp10. This leads to sequestration of the substrate protein in the inner cavity of Hsp60 where, for a certain period of time, it can fold undisturbed by other cell components. Synchronous hydrolysis of ATP in all Hsp60 subunits results in the dissociation of the chaperonin rings and the release of ADP and the folded substrate protein. In Pongo abelii (Sumatran orangutan), this protein is 60 kDa heat shock protein, mitochondrial (HSPD1).